The sequence spans 99 residues: Small ribosomal subunit protein bS18 (99 aa).

It belongs to the bacterial ribosomal protein bS18 family. In terms of assembly, part of the 30S ribosomal subunit. Forms a tight heterodimer with protein bS6.

Functionally, binds as a heterodimer with protein bS6 to the central domain of the 16S rRNA, where it helps stabilize the platform of the 30S subunit. The sequence is that of Small ribosomal subunit protein bS18 from Christiangramia forsetii (strain DSM 17595 / CGMCC 1.15422 / KT0803) (Gramella forsetii).